Reading from the N-terminus, the 194-residue chain is Ras-related protein Rab-22A (194 aa).

12 to 20 (GDTGVGKSS) serves as a coordination point for GTP. An Effector region motif is present at residues 34–42 (INPTIGASF). GTP is bound by residues 60 to 64 (DTAGQ), 118 to 121 (NKCD), and 148 to 150 (SAK). The segment at 174-194 (PSGGKGFKLRRQPSEPKRSCC) is disordered. Basic and acidic residues predominate over residues 185 to 194 (QPSEPKRSCC). S-geranylgeranyl cysteine attachment occurs at residues cysteine 193 and cysteine 194.

This sequence belongs to the small GTPase superfamily. Rab family. In terms of assembly, interacts directly with ZFYVE20. Binds EEA1. Interacts (in its GTP-bound form) with RABGEF1. Interacts (in its GTP-bound form) with RINL.

It is found in the endosome membrane. The protein resides in the cell membrane. It localises to the early endosome. Its subcellular location is the late endosome. The protein localises to the cell projection. It is found in the ruffle. The protein resides in the cytoplasmic vesicle. It localises to the phagosome. Its subcellular location is the phagosome membrane. Its function is as follows. Plays a role in endocytosis and intracellular protein transport. Mediates trafficking of TF from early endosomes to recycling endosomes. Required for NGF-mediated endocytosis of NTRK1, and subsequent neurite outgrowth. Binds GTP and GDP and has low GTPase activity. Alternates between a GTP-bound active form and a GDP-bound inactive form. The sequence is that of Ras-related protein Rab-22A (RAB22A) from Homo sapiens (Human).